The chain runs to 659 residues: Hemocyanin subunit B (659 aa).

An N-terminal signal peptide occupies residues 1–18; it reads MVAKWCVLAMCLLVAVGA. Cu cation is bound by residues histidine 198, histidine 202, and histidine 232. The N-linked (GlcNAc...) asparagine glycan is linked to asparagine 318. Residues histidine 353, histidine 357, and histidine 393 each coordinate Cu cation. Cysteine 562 and cysteine 609 are oxidised to a cystine.

Belongs to the tyrosinase family. Hemocyanin subfamily. 36-chain polymer consisting of 6 hexamers, each of which includes 4 different chains, A, B, C and D. As to expression, hemolymph.

The protein localises to the secreted. It is found in the extracellular space. Hemocyanins are copper-containing oxygen carriers occurring freely dissolved in the hemolymph of many mollusks and arthropods. The protein is Hemocyanin subunit B (HCB) of Scutigera coleoptrata (House centipede).